The following is a 533-amino-acid chain: Lysine--tRNA ligase 1 (533 aa).

Residues 26–34 (PSGHIHIGN) carry the 'HIGH' region motif. Positions 272–276 (AMSSS) match the 'KMSKS' region motif.

It belongs to the class-I aminoacyl-tRNA synthetase family.

It is found in the cytoplasm. The catalysed reaction is tRNA(Lys) + L-lysine + ATP = L-lysyl-tRNA(Lys) + AMP + diphosphate. In Methanosarcina acetivorans (strain ATCC 35395 / DSM 2834 / JCM 12185 / C2A), this protein is Lysine--tRNA ligase 1.